The primary structure comprises 509 residues: Lysine--tRNA ligase (509 aa).

Mg(2+) is bound by residues Glu417 and Glu424.

This sequence belongs to the class-II aminoacyl-tRNA synthetase family. In terms of assembly, homodimer. It depends on Mg(2+) as a cofactor.

It localises to the cytoplasm. The enzyme catalyses tRNA(Lys) + L-lysine + ATP = L-lysyl-tRNA(Lys) + AMP + diphosphate. This is Lysine--tRNA ligase from Blochmanniella pennsylvanica (strain BPEN).